A 63-amino-acid polypeptide reads, in one-letter code: Omega-conotoxin Eu1.6 (63 aa).

A signal peptide spans 1 to 21 (MGMRMMFTVFLLVVLATTVVS). Positions 22–47 (FTSDRAPDGRNAAAKAFGLITPTVRK) are excised as a propeptide. 2 disulfide bridges follow: C49/C55 and C50/C63. A ser-Xaa-Pro motif, crucial for potent interaction with nAChR region spans residues 51-53 (SNP).

The protein belongs to the conotoxin A superfamily. Expressed by the venom duct.

Its subcellular location is the secreted. In terms of biological role, this amidated peptide potently and teversibly inhibits Cav2.2/CACNA1B. Steady-state inactivation is enhanced at hyperpolarized membrane potentials. Also shows a weak interaction at alpha-3-beta-4/ CHRNA3-CHRNB4 and alpha-7/CHRNA7 nAChRs subtypes. In vivo, exhibits a potent analgesic activity in rat partial sciatic nerve injury and chronic constriction injury models. In Conus eburneus (Ivory cone), this protein is Omega-conotoxin Eu1.6.